The following is a 428-amino-acid chain: Glutamyl-tRNA reductase (428 aa).

Residues 50 to 53 (TCNR), serine 110, 115 to 117 (ETQ), and glutamine 121 contribute to the substrate site. The Nucleophile role is filled by cysteine 51. 190–195 (GAGEMG) is an NADP(+) binding site.

The protein belongs to the glutamyl-tRNA reductase family. In terms of assembly, homodimer.

The enzyme catalyses (S)-4-amino-5-oxopentanoate + tRNA(Glu) + NADP(+) = L-glutamyl-tRNA(Glu) + NADPH + H(+). It participates in porphyrin-containing compound metabolism; protoporphyrin-IX biosynthesis; 5-aminolevulinate from L-glutamyl-tRNA(Glu): step 1/2. In terms of biological role, catalyzes the NADPH-dependent reduction of glutamyl-tRNA(Glu) to glutamate 1-semialdehyde (GSA). The chain is Glutamyl-tRNA reductase from Campylobacter curvus (strain 525.92).